Here is a 120-residue protein sequence, read N- to C-terminus: Superoxide dismutase [Cu-Zn] (120 aa).

Cu cation contacts are provided by His-11, His-13, and His-28. Residues 16 to 52 (GDTTNGCMSTGPHFNPTGKEHGAPQDENRHAGDLGNI) are disordered. A disulfide bridge links Cys-22 with Cys-112. His-28, His-36, His-45, and Asp-48 together coordinate Zn(2+). Residues 33–47 (GKEHGAPQDENRHAG) are compositionally biased toward basic and acidic residues. Residue His-85 participates in Cu cation binding.

It belongs to the Cu-Zn superoxide dismutase family. Homodimer. Requires Cu cation as cofactor. It depends on Zn(2+) as a cofactor.

It localises to the cytoplasm. The catalysed reaction is 2 superoxide + 2 H(+) = H2O2 + O2. Its function is as follows. Destroys radicals which are normally produced within the cells and which are toxic to biological systems. In Aspergillus japonicus, this protein is Superoxide dismutase [Cu-Zn] (sodC).